Here is a 454-residue protein sequence, read N- to C-terminus: Mogroside I-E synthase (454 aa).

The Proton acceptor role is filled by His-18. Residue His-18 participates in an anthocyanidin binding. Asp-111 acts as the Charge relay in catalysis. His-144 serves as a coordination point for an anthocyanidin. Cysteines 259 and 331 form a disulfide. UDP-alpha-D-glucose contacts are provided by Ser-278, Cys-331, Gln-333, Trp-351, Asn-352, Ser-353, and Glu-356. Ala-371 is an an anthocyanidin binding site. The UDP-alpha-D-glucose site is built by Asp-372 and Gln-373.

The protein belongs to the UDP-glycosyltransferase family. In terms of tissue distribution, highly expressed in young fruits 15 days after anthesis (15-DAA).

The enzyme catalyses mogrol + UDP-alpha-D-glucose = mogroside IE + UDP + H(+). The protein operates within secondary metabolite biosynthesis; terpenoid biosynthesis. Its activity is regulated as follows. Activity is increased by Mg(2+). In terms of biological role, UDP-glycosyltransferase involved in the biosynthesis of cucurbitacin and mogroside tetracyclic triterpene natural products (e.g. siamenoside I and mogrosides IV, V and VI). Cucurbitacins have cytotoxic properties and exhibit deterrent taste as a defense barrier against herbivores. Mogrosides are nonsugar highly oxygenated compounds used as high-intensity zero-calorie sweeteners; they also possess pharmacological properties such as regulating immunity, lowering blood sugar and lipid levels, protecting the liver, and acting as antioxidants and antitumor agents. Catalyzes the transfer of a glucose moiety to the C-3 hydroxyl of mogrol to form mogroside I-E. Besides mogrol, UGT74AC1 also shows activity in vitro with quercetin and naringenin as substrate. This is Mogroside I-E synthase from Siraitia grosvenorii (Monk's fruit).